The primary structure comprises 342 residues: 4-hydroxy-3-methylbut-2-enyl diphosphate reductase (342 aa).

Cys-47 is a [4Fe-4S] cluster binding site. (2E)-4-hydroxy-3-methylbut-2-enyl diphosphate is bound by residues His-78 and His-111. 2 residues coordinate dimethylallyl diphosphate: His-78 and His-111. Isopentenyl diphosphate-binding residues include His-78 and His-111. [4Fe-4S] cluster is bound at residue Cys-133. A (2E)-4-hydroxy-3-methylbut-2-enyl diphosphate-binding site is contributed by His-161. Residue His-161 coordinates dimethylallyl diphosphate. His-161 serves as a coordination point for isopentenyl diphosphate. Glu-163 (proton donor) is an active-site residue. Thr-201 contributes to the (2E)-4-hydroxy-3-methylbut-2-enyl diphosphate binding site. Residue Cys-231 coordinates [4Fe-4S] cluster. Residues Ser-259, Ser-260, Asn-261, and Ser-303 each contribute to the (2E)-4-hydroxy-3-methylbut-2-enyl diphosphate site. Residues Ser-259, Ser-260, Asn-261, and Ser-303 each contribute to the dimethylallyl diphosphate site. 4 residues coordinate isopentenyl diphosphate: Ser-259, Ser-260, Asn-261, and Ser-303.

Belongs to the IspH family. [4Fe-4S] cluster serves as cofactor.

The catalysed reaction is isopentenyl diphosphate + 2 oxidized [2Fe-2S]-[ferredoxin] + H2O = (2E)-4-hydroxy-3-methylbut-2-enyl diphosphate + 2 reduced [2Fe-2S]-[ferredoxin] + 2 H(+). It carries out the reaction dimethylallyl diphosphate + 2 oxidized [2Fe-2S]-[ferredoxin] + H2O = (2E)-4-hydroxy-3-methylbut-2-enyl diphosphate + 2 reduced [2Fe-2S]-[ferredoxin] + 2 H(+). It participates in isoprenoid biosynthesis; dimethylallyl diphosphate biosynthesis; dimethylallyl diphosphate from (2E)-4-hydroxy-3-methylbutenyl diphosphate: step 1/1. Its pathway is isoprenoid biosynthesis; isopentenyl diphosphate biosynthesis via DXP pathway; isopentenyl diphosphate from 1-deoxy-D-xylulose 5-phosphate: step 6/6. Its function is as follows. Catalyzes the conversion of 1-hydroxy-2-methyl-2-(E)-butenyl 4-diphosphate (HMBPP) into a mixture of isopentenyl diphosphate (IPP) and dimethylallyl diphosphate (DMAPP). Acts in the terminal step of the DOXP/MEP pathway for isoprenoid precursor biosynthesis. The chain is 4-hydroxy-3-methylbut-2-enyl diphosphate reductase from Anaplasma marginale (strain Florida).